The chain runs to 166 residues: MAEVEVRVRQEQVAEFRETFAFFDKDGDGCITLEELDTVVRSLGQTPTREELAEMIRDVDVDGNGTIEFAEFLALMARKASRGGENGGGGDDSGDAADEELREAFKVFDKDQDGLISAAELRHVMISLGEKLTDEEVEQMIREADLDGDGQVNFDEFVRMMMLSDQ.

4 consecutive EF-hand domains span residues glutamate 11 to threonine 46, proline 47 to arginine 82, alanine 96 to lysine 131, and leucine 132 to glutamine 166. Residues aspartate 24, aspartate 26, aspartate 28, cysteine 30, glutamate 35, aspartate 60, aspartate 62, asparagine 64, threonine 66, glutamate 71, aspartate 109, aspartate 111, aspartate 113, and glutamate 120 each contribute to the Ca(2+) site. An N6,N6,N6-trimethyllysine modification is found at lysine 131. Residues aspartate 145, aspartate 147, aspartate 149, glutamine 151, and glutamate 156 each contribute to the Ca(2+) site.

The protein belongs to the calmodulin family.

Its function is as follows. Potential calcium sensor. The chain is Calmodulin-like protein 5 (CML5) from Oryza sativa subsp. japonica (Rice).